The sequence spans 443 residues: Xaa-Pro dipeptidase (443 aa).

Mn(2+)-binding residues include aspartate 246, aspartate 257, histidine 339, glutamate 384, and glutamate 423.

The protein belongs to the peptidase M24B family. Bacterial-type prolidase subfamily. Mn(2+) serves as cofactor.

The enzyme catalyses Xaa-L-Pro dipeptide + H2O = an L-alpha-amino acid + L-proline. Splits dipeptides with a prolyl residue in the C-terminal position. The protein is Xaa-Pro dipeptidase of Erwinia tasmaniensis (strain DSM 17950 / CFBP 7177 / CIP 109463 / NCPPB 4357 / Et1/99).